Reading from the N-terminus, the 270-residue chain is Non-structural maintenance of chromosomes element 1 homolog (270 aa).

The segment at 185 to 226 (CNVCHKIAIQCQLCENCGIPLHLQCAGIYFRGIANPLCPNCK) adopts an RING-type; atypical zinc-finger fold. The disordered stretch occupies residues 236–270 (LSQVSSQGPSHSQAAPVRGRNQRSRNISTVARTSR). Polar residues-rich tracts occupy residues 237 to 248 (SQVSSQGPSHSQ) and 259 to 270 (SRNISTVARTSR).

Belongs to the NSE1 family. Component of the SMC5-SMC6 complex.

The protein resides in the nucleus. The protein localises to the chromosome. Its subcellular location is the telomere. The catalysed reaction is S-ubiquitinyl-[E2 ubiquitin-conjugating enzyme]-L-cysteine + [acceptor protein]-L-lysine = [E2 ubiquitin-conjugating enzyme]-L-cysteine + N(6)-ubiquitinyl-[acceptor protein]-L-lysine.. RING-type zinc finger-containing E3 ubiquitin ligase that assembles with melanoma antigen protein (MAGE) to catalyze the direct transfer of ubiquitin from E2 ubiquitin-conjugating enzyme to a specific substrate. Within MAGE-RING ubiquitin ligase complex, MAGE stimulates and specifies ubiquitin ligase activity likely through recruitment and/or stabilization of the E2 ubiquitin-conjugating enzyme at the E3:substrate complex. Involved in maintenance of genome integrity, DNA damage response and DNA repair. The chain is Non-structural maintenance of chromosomes element 1 homolog (nsmce1) from Xenopus tropicalis (Western clawed frog).